Consider the following 227-residue polypeptide: MERPLESYKKEAAHAAIAYVQDGMVVGLGTGSTARYAVLELARRLREGELKGVVGVPTSRATEELAKREGIPLVDLPPEGVDLAIDGADEIAPGLALIKGMGGALLREKIVERAAKEFIVIADHTKKVPVLGRGPVPVEIVPFGYRATLKAIADLGGEPELRMDGDEFYFTDGGHLIADCRFGPIGDPLGLHRALLEIPGVVETGLFVGMATRALVAGPFGVEELLP.

Substrate contacts are provided by residues 30 to 33 (TGST), 86 to 89 (DGAD), and 99 to 104 (KGMGGA). The active-site Proton acceptor is the Glu-108. A substrate-binding site is contributed by Lys-126.

This sequence belongs to the ribose 5-phosphate isomerase family. Homodimer.

It catalyses the reaction aldehydo-D-ribose 5-phosphate = D-ribulose 5-phosphate. Its pathway is carbohydrate degradation; pentose phosphate pathway; D-ribose 5-phosphate from D-ribulose 5-phosphate (non-oxidative stage): step 1/1. Functionally, involved in the first step of the non-oxidative branch of the pentose phosphate pathway. It catalyzes the reversible conversion of ribose-5-phosphate to ribulose 5-phosphate. Can also act on D-ribose-5-diphosphate and D-ribose-5-triphosphate as substrate. In Thermus thermophilus (strain ATCC BAA-163 / DSM 7039 / HB27), this protein is Ribose-5-phosphate isomerase A.